Consider the following 590-residue polypeptide: Aspartate--tRNA(Asp/Asn) ligase (590 aa).

Glutamate 182 is an L-aspartate binding site. Positions 206 to 209 (QLFK) are aspartate. Arginine 228 contacts L-aspartate. Residues 228–230 (RDE) and glutamine 237 contribute to the ATP site. Histidine 454 contacts L-aspartate. Glutamate 488 contributes to the ATP binding site. Arginine 495 is an L-aspartate binding site. An ATP-binding site is contributed by 540–543 (GLDR).

This sequence belongs to the class-II aminoacyl-tRNA synthetase family. Type 1 subfamily. Homodimer.

The protein resides in the cytoplasm. The enzyme catalyses tRNA(Asx) + L-aspartate + ATP = L-aspartyl-tRNA(Asx) + AMP + diphosphate. Aspartyl-tRNA synthetase with relaxed tRNA specificity since it is able to aspartylate not only its cognate tRNA(Asp) but also tRNA(Asn). Reaction proceeds in two steps: L-aspartate is first activated by ATP to form Asp-AMP and then transferred to the acceptor end of tRNA(Asp/Asn). This Halothermothrix orenii (strain H 168 / OCM 544 / DSM 9562) protein is Aspartate--tRNA(Asp/Asn) ligase.